The sequence spans 141 residues: Large ribosomal subunit protein uL11A (141 aa).

This sequence belongs to the universal ribosomal protein uL11 family. As to quaternary structure, part of the ribosomal stalk of the 50S ribosomal subunit. Interacts with L10 and the large rRNA to form the base of the stalk. L10 forms an elongated spine to which L12 dimers bind in a sequential fashion forming a multimeric L10(L12)X complex. Post-translationally, one or more lysine residues are methylated.

In terms of biological role, forms part of the ribosomal stalk which helps the ribosome interact with GTP-bound translation factors. In Bacillus cereus (strain ATCC 14579 / DSM 31 / CCUG 7414 / JCM 2152 / NBRC 15305 / NCIMB 9373 / NCTC 2599 / NRRL B-3711), this protein is Large ribosomal subunit protein uL11A.